A 146-amino-acid chain; its full sequence is Hemoglobin subunit beta (146 aa).

V1 is modified (N-acetylvaline). The Globin domain maps to 2–146 (HLSGEEKAAV…VANALAHKYH (145 aa)). T12 carries the post-translational modification Phosphothreonine. Position 44 is a phosphoserine (S44). An N6-acetyllysine modification is found at K59. H63 serves as a coordination point for heme b. Residue K82 is modified to N6-acetyllysine. H92 is a binding site for heme b. S-nitrosocysteine is present on C93. K144 is modified (N6-acetyllysine).

The protein belongs to the globin family. In terms of assembly, heterotetramer of two alpha chains and two beta chains. Red blood cells.

Its function is as follows. Involved in oxygen transport from the lung to the various peripheral tissues. This is Hemoglobin subunit beta (HBB) from Tupaia glis (Common tree shrew).